Here is a 66-residue protein sequence, read N- to C-terminus: Sodium/potassium-transporting ATPase subunit gamma (66 aa).

Residues 29–46 form a helical membrane-spanning segment; that stretch reads GGLIFAGLAFIVGLLILL.

Belongs to the FXYD family. As to quaternary structure, regulatory subunit of the sodium/potassium-transporting ATPase which is composed of a catalytic alpha subunit, an auxiliary non-catalytic beta subunit and an additional regulatory subunit. As to expression, expressed in the distal convoluted tubule in the kidney. Found on basolateral membranes of nephron epithelial cells.

Its subcellular location is the membrane. Functionally, may be involved in forming the receptor site for cardiac glycoside binding or may modulate the transport function of the sodium ATPase. This chain is Sodium/potassium-transporting ATPase subunit gamma (FXYD2), found in Homo sapiens (Human).